Consider the following 65-residue polypeptide: Sarcoplasmic/endoplasmic reticulum calcium ATPase regulator ARLN (65 aa).

M1 is modified (N-acetylmethionine). Positions 1 to 38 (MEVGQAASGTDGVRERRGSSAARRRSQDEPVQSGMNGI) are disordered. S19 and S26 each carry phosphoserine. The helical transmembrane segment at 44–64 (WLDLWLFILFDLALFIFVYLL) threads the bilayer.

Homooligomer. Can also form heterooligomers with other sarcoplasmic/endoplasmic reticulum calcium ATPase (SERCA) regulators ERLN, PLN, SLN and STRIT1/DWORF. Monomer. Interacts as a monomer with ATP2A2/SERCA2; the interaction results in inhibition of ATP2A2 Ca(2+) affinity.

It localises to the endoplasmic reticulum membrane. Its function is as follows. Inhibits the activity of the calcium ATPases ATP2A2/SERCA2 and ATP2A3/SERCA3 by decreasing their apparent affinity for Ca(2+). The polypeptide is Sarcoplasmic/endoplasmic reticulum calcium ATPase regulator ARLN (Arln) (Rattus norvegicus (Rat)).